The sequence spans 223 residues: Nicotinamide/nicotinic acid mononucleotide adenylyltransferase 2 (223 aa).

The NAD(+) site is built by S11 and F12. H19 is an ATP binding site. W87, T90, G116, D118, L133, W134, and R153 together coordinate NAD(+). 190–191 (TR) is an ATP binding site.

It belongs to the eukaryotic NMN adenylyltransferase family. Requires a divalent metal cation as cofactor.

It carries out the reaction beta-nicotinamide D-ribonucleotide + ATP + H(+) = diphosphate + NAD(+). The catalysed reaction is nicotinate beta-D-ribonucleotide + ATP + H(+) = deamido-NAD(+) + diphosphate. The protein operates within cofactor biosynthesis; NAD(+) biosynthesis; deamido-NAD(+) from nicotinate D-ribonucleotide: step 1/1. It functions in the pathway cofactor biosynthesis; NAD(+) biosynthesis; NAD(+) from nicotinamide D-ribonucleotide: step 1/1. Its function is as follows. Catalyzes the formation of NAD(+) from nicotinamide mononucleotide (NMN) and ATP. Can also use the deamidated form; nicotinic acid mononucleotide (NaMN) as substrate. The sequence is that of Nicotinamide/nicotinic acid mononucleotide adenylyltransferase 2 from Caenorhabditis elegans.